The sequence spans 459 residues: Putative BTB/POZ domain-containing protein R541 (459 aa).

Residues Asn-76–Tyr-143 form the BTB domain.

The protein belongs to the mimivirus BTB/WD family.

The chain is Putative BTB/POZ domain-containing protein R541 from Acanthamoeba polyphaga mimivirus (APMV).